The sequence spans 147 residues: UPF0275 protein PM0504 (147 aa).

Belongs to the UPF0275 family.

The protein is UPF0275 protein PM0504 of Pasteurella multocida (strain Pm70).